The following is a 203-amino-acid chain: Small ribosomal subunit protein uS4 (203 aa).

The interval 22 to 45 (TGKELARRPYKPGQHGPNSRGKVS) is disordered. The 64-residue stretch at 93 to 156 (QRLDNVVYRL…QNISTIKEAV (64 aa)) folds into the S4 RNA-binding domain.

It belongs to the universal ribosomal protein uS4 family. As to quaternary structure, part of the 30S ribosomal subunit. Contacts protein S5. The interaction surface between S4 and S5 is involved in control of translational fidelity.

In terms of biological role, one of the primary rRNA binding proteins, it binds directly to 16S rRNA where it nucleates assembly of the body of the 30S subunit. Its function is as follows. With S5 and S12 plays an important role in translational accuracy. This is Small ribosomal subunit protein uS4 from Enterococcus faecalis (strain ATCC 700802 / V583).